The sequence spans 208 residues: Large ribosomal subunit protein eL13 (208 aa).

A phosphoserine mark is found at serine 177 and serine 180.

The protein belongs to the eukaryotic ribosomal protein eL13 family. In terms of assembly, component of the large ribosomal subunit (LSU). Mature yeast ribosomes consist of a small (40S) and a large (60S) subunit. The 40S small subunit contains 1 molecule of ribosomal RNA (18S rRNA) and at least 33 different proteins. The large 60S subunit contains 3 rRNA molecules (25S, 5.8S and 5S rRNA) and at least 46 different proteins.

It localises to the cytoplasm. Component of the ribosome, a large ribonucleoprotein complex responsible for the synthesis of proteins in the cell. The small ribosomal subunit (SSU) binds messenger RNAs (mRNAs) and translates the encoded message by selecting cognate aminoacyl-transfer RNA (tRNA) molecules. The large subunit (LSU) contains the ribosomal catalytic site termed the peptidyl transferase center (PTC), which catalyzes the formation of peptide bonds, thereby polymerizing the amino acids delivered by tRNAs into a polypeptide chain. The nascent polypeptides leave the ribosome through a tunnel in the LSU and interact with protein factors that function in enzymatic processing, targeting, and the membrane insertion of nascent chains at the exit of the ribosomal tunnel. The sequence is that of Large ribosomal subunit protein eL13 (rpl13) from Schizosaccharomyces pombe (strain 972 / ATCC 24843) (Fission yeast).